Consider the following 460-residue polypeptide: Elongation factor 1-alpha (460 aa).

Gly-2 is modified (n,N,N-trimethylglycine). An N6,N6-dimethyllysine; alternate modification is found at Lys-3. Position 3 is an N6-methyllysine; alternate (Lys-3). The 236-residue stretch at 5–240 folds into the tr-type G domain; the sequence is KTHVNLVVIG…DAIEPPVRPS (236 aa). Residues 14–21 form a G1 region; that stretch reads GHVDAGKS. Residue 14–21 coordinates GTP; sequence GHVDAGKS. Lys-30 bears the N6-methyllysine mark. The G2 stretch occupies residues 70 to 74; it reads GITID. An N6,N6,N6-trimethyllysine modification is found at Lys-79. The tract at residues 91–94 is G3; it reads DAPG. GTP contacts are provided by residues 91 to 95 and 153 to 156; these read DAPGH and NKMD. Residues 153-156 form a G4 region; sequence NKMD. The tract at residues 192-194 is G5; it reads SGW. Lys-317 is subject to N6,N6-dimethyllysine; alternate. Position 317 is an N6-methyllysine; alternate (Lys-317). Lys-391 is modified (N6-methyllysine).

Belongs to the TRAFAC class translation factor GTPase superfamily. Classic translation factor GTPase family. EF-Tu/EF-1A subfamily.

Its subcellular location is the cytoplasm. In terms of biological role, this protein promotes the GTP-dependent binding of aminoacyl-tRNA to the A-site of ribosomes during protein biosynthesis. The sequence is that of Elongation factor 1-alpha (TEF) from Yarrowia lipolytica (strain CLIB 122 / E 150) (Yeast).